The primary structure comprises 446 residues: Deoxyguanosinetriphosphate triphosphohydrolase-like protein (446 aa).

The interval 1–28 (MSSSVWQERRHGEDKQRRNDHRSPFQRD) is disordered. Basic and acidic residues predominate over residues 7-28 (QERRHGEDKQRRNDHRSPFQRD). Residues 59 to 252 (RLTHSLEVSQ…MELADDIAYA (194 aa)) enclose the HD domain.

Belongs to the dGTPase family. Type 2 subfamily.

The chain is Deoxyguanosinetriphosphate triphosphohydrolase-like protein from Shewanella sp. (strain MR-7).